Here is a 135-residue protein sequence, read N- to C-terminus: uncharacterized protein (135 aa).

The segment at 1-36 (MSHAEKPMSDSVNHHHHRTFEVLTAEPVRSRRKPRH) is disordered.

It belongs to the transposase 8 family.

This is an uncharacterized protein from Sinorhizobium fredii (strain NBRC 101917 / NGR234).